We begin with the raw amino-acid sequence, 320 residues long: UDP-N-acetylenolpyruvoylglucosamine reductase (320 aa).

The 182-residue stretch at 35 to 216 (RAGGPAQVLF…KQAMDEVQHH (182 aa)) folds into the FAD-binding PCMH-type domain. The active site involves Arg181. The Proton donor role is filled by Ser230. Glu300 is a catalytic residue.

Belongs to the MurB family. The cofactor is FAD.

The protein localises to the cytoplasm. It carries out the reaction UDP-N-acetyl-alpha-D-muramate + NADP(+) = UDP-N-acetyl-3-O-(1-carboxyvinyl)-alpha-D-glucosamine + NADPH + H(+). It functions in the pathway cell wall biogenesis; peptidoglycan biosynthesis. Its function is as follows. Cell wall formation. The protein is UDP-N-acetylenolpyruvoylglucosamine reductase of Brucella anthropi (strain ATCC 49188 / DSM 6882 / CCUG 24695 / JCM 21032 / LMG 3331 / NBRC 15819 / NCTC 12168 / Alc 37) (Ochrobactrum anthropi).